The following is a 311-amino-acid chain: Pseudouridine-5'-phosphate glycosidase (311 aa).

The Proton donor role is filled by Glu-32. The substrate site is built by Lys-96 and Val-116. Residue Asp-148 coordinates Mn(2+). Residue 150 to 152 (SAD) coordinates substrate. The active-site Nucleophile is Lys-169.

The protein belongs to the pseudouridine-5'-phosphate glycosidase family. In terms of assembly, homotrimer. Mn(2+) is required as a cofactor.

It catalyses the reaction D-ribose 5-phosphate + uracil = psi-UMP + H2O. In terms of biological role, catalyzes the reversible cleavage of pseudouridine 5'-phosphate (PsiMP) to ribose 5-phosphate and uracil. Functions biologically in the cleavage direction, as part of a pseudouridine degradation pathway. This chain is Pseudouridine-5'-phosphate glycosidase, found in Roseiflexus sp. (strain RS-1).